An 850-amino-acid chain; its full sequence is DNA polymerase I (850 aa).

The 288-residue stretch at 1–288 (MKLVIFDGNS…SIIKRLGLSE (288 aa)) folds into the 5'-3' exonuclease domain. The polymerase stretch occupies residues 470 to 850 (VDRDALIQYT…KEGLNWYETK (381 aa)).

The protein belongs to the DNA polymerase type-A family.

The enzyme catalyses DNA(n) + a 2'-deoxyribonucleoside 5'-triphosphate = DNA(n+1) + diphosphate. In addition to polymerase activity, this DNA polymerase exhibits 3'-5' and 5'-3' exonuclease activity. The sequence is that of DNA polymerase I (polA) from Caldicellulosiruptor bescii (strain ATCC BAA-1888 / DSM 6725 / KCTC 15123 / Z-1320) (Anaerocellum thermophilum).